Here is a 597-residue protein sequence, read N- to C-terminus: Arginine--tRNA ligase (597 aa).

The short motif at P125 to H135 is the 'HIGH' region element.

This sequence belongs to the class-I aminoacyl-tRNA synthetase family. Monomer.

Its subcellular location is the cytoplasm. It catalyses the reaction tRNA(Arg) + L-arginine + ATP = L-arginyl-tRNA(Arg) + AMP + diphosphate. The sequence is that of Arginine--tRNA ligase from Bacteroides fragilis (strain YCH46).